Consider the following 92-residue polypeptide: Small ribosomal subunit protein uS19 (92 aa).

It belongs to the universal ribosomal protein uS19 family.

Functionally, protein S19 forms a complex with S13 that binds strongly to the 16S ribosomal RNA. This chain is Small ribosomal subunit protein uS19, found in Neisseria meningitidis serogroup C (strain 053442).